The chain runs to 211 residues: Mitotic spindle assembly checkpoint protein MAD2B (211 aa).

The region spanning 13 to 203 (QVVADVLCEF…SDILKMQLYV (191 aa)) is the HORMA domain. The interval 21–155 (EFLEVAVHLI…FTVLVHTREA (135 aa)) is mediates interaction with REV1 and REV3L and homodimerization.

As to quaternary structure, homooligomer. Heterodimer with REV3L. This dimer forms the minimal DNA polymerase zeta complex (Pol-zeta2), with REV3L bearing DNA polymerase catalytic activity, although its activity is very low in this context. Component of the tetrameric Pol-zeta complex (Pol-zeta4), which consists of REV3L, MAD2L2, POLD2 and POLD3; Pol-zeta4 is the fully active form of DNA polymerase zeta. Component of the shieldin complex, consisting of SHLD1, SHLD2, SHLD3 and MAD2L2/REV7. Within the complex, SHLD2 forms a scaffold which interacts with a SHLD3-MAD2L2 subcomplex via its N-terminus, and with SHLD1 via its C-terminus. Interacts with REV1. Interacts with ADAM9. Interacts with CHAMP1. Interacts with FZR1 (in complex with the anaphase promoting complex APC). May interact with CDC20. Interacts with RAN. Interacts with ELK1; the interaction is direct and recruits MAD2L2 to ELK1-specific promoters. May interact with the JNK kinases MAPK8 and/or MAPK9 to stimulate ELK1 phosphorylation and transcriptional activity upon DNA damage. Interacts with TCF7L2; prevents its binding to promoters and negatively modulates its transcriptional activity. Interacts with YY1AP1. Interacts with PRCC; the interaction is direct. Interacts with POGZ. Interacts with ASTE1.

It is found in the nucleus. The protein localises to the cytoplasm. The protein resides in the cytoskeleton. It localises to the spindle. Its function is as follows. Adapter protein able to interact with different proteins and involved in different biological processes. Mediates the interaction between the error-prone DNA polymerase zeta catalytic subunit REV3L and the inserter polymerase REV1, thereby mediating the second polymerase switching in translesion DNA synthesis. Translesion DNA synthesis releases the replication blockade of replicative polymerases, stalled in presence of DNA lesions. Component of the shieldin complex, which plays an important role in repair of DNA double-stranded breaks (DSBs). During G1 and S phase of the cell cycle, the complex functions downstream of TP53BP1 to promote non-homologous end joining (NHEJ) and suppress DNA end resection. Mediates various NHEJ-dependent processes including immunoglobulin class-switch recombination, and fusion of unprotected telomeres. May also regulate another aspect of cellular response to DNA damage through regulation of the JNK-mediated phosphorylation and activation of the transcriptional activator ELK1. Inhibits the FZR1- and probably CDC20-mediated activation of the anaphase promoting complex APC thereby regulating progression through the cell cycle. Regulates TCF7L2-mediated gene transcription and may play a role in epithelial-mesenchymal transdifferentiation. In Bos taurus (Bovine), this protein is Mitotic spindle assembly checkpoint protein MAD2B (MAD2L2).